We begin with the raw amino-acid sequence, 306 residues long: Ornithine carbamoyltransferase (306 aa).

Carbamoyl phosphate is bound by residues 51–54 (STRT), Q78, R102, and 129–132 (HPCQ). Residues N160, D223, and 227-228 (SM) contribute to the L-ornithine site. Residues 263–264 (CL) and R291 contribute to the carbamoyl phosphate site.

The protein belongs to the aspartate/ornithine carbamoyltransferase superfamily. OTCase family.

Its subcellular location is the cytoplasm. It carries out the reaction carbamoyl phosphate + L-ornithine = L-citrulline + phosphate + H(+). The protein operates within amino-acid biosynthesis; L-arginine biosynthesis; L-arginine from L-ornithine and carbamoyl phosphate: step 1/3. Functionally, reversibly catalyzes the transfer of the carbamoyl group from carbamoyl phosphate (CP) to the N(epsilon) atom of ornithine (ORN) to produce L-citrulline. This chain is Ornithine carbamoyltransferase (argF), found in Nostoc punctiforme (strain ATCC 29133 / PCC 73102).